A 341-amino-acid polypeptide reads, in one-letter code: L-threonine 3-dehydrogenase (341 aa).

Position 38 (C38) interacts with Zn(2+). Residues T40 and H43 each act as charge relay system in the active site. 6 residues coordinate Zn(2+): H63, E64, C93, C96, C99, and C107. Residues I175, D195, R200, 262–264 (LGI), and 286–287 (IY) contribute to the NAD(+) site.

It belongs to the zinc-containing alcohol dehydrogenase family. In terms of assembly, homotetramer. Requires Zn(2+) as cofactor.

It localises to the cytoplasm. It catalyses the reaction L-threonine + NAD(+) = (2S)-2-amino-3-oxobutanoate + NADH + H(+). It participates in amino-acid degradation; L-threonine degradation via oxydo-reductase pathway; glycine from L-threonine: step 1/2. In terms of biological role, catalyzes the NAD(+)-dependent oxidation of L-threonine to 2-amino-3-ketobutyrate. The protein is L-threonine 3-dehydrogenase of Shewanella putrefaciens (strain CN-32 / ATCC BAA-453).